The sequence spans 283 residues: 4-diphosphocytidyl-2-C-methyl-D-erythritol kinase (283 aa).

Residue Lys-10 is part of the active site. 99–109 is an ATP binding site; it reads PMGGGLGGGSS. Asp-141 is an active-site residue.

Belongs to the GHMP kinase family. IspE subfamily. In terms of assembly, homodimer.

The enzyme catalyses 4-CDP-2-C-methyl-D-erythritol + ATP = 4-CDP-2-C-methyl-D-erythritol 2-phosphate + ADP + H(+). Its pathway is isoprenoid biosynthesis; isopentenyl diphosphate biosynthesis via DXP pathway; isopentenyl diphosphate from 1-deoxy-D-xylulose 5-phosphate: step 3/6. Catalyzes the phosphorylation of the position 2 hydroxy group of 4-diphosphocytidyl-2C-methyl-D-erythritol. The sequence is that of 4-diphosphocytidyl-2-C-methyl-D-erythritol kinase from Salmonella enteritidis PT4 (strain P125109).